Consider the following 349-residue polypeptide: Methylthioribose-1-phosphate isomerase (349 aa).

Residues 49–51 (RGA), Arg-92, and Gln-199 each bind substrate. Catalysis depends on Asp-240, which acts as the Proton donor. 250–251 (NK) provides a ligand contact to substrate.

It belongs to the eIF-2B alpha/beta/delta subunits family. MtnA subfamily.

It carries out the reaction 5-(methylsulfanyl)-alpha-D-ribose 1-phosphate = 5-(methylsulfanyl)-D-ribulose 1-phosphate. Its pathway is amino-acid biosynthesis; L-methionine biosynthesis via salvage pathway; L-methionine from S-methyl-5-thio-alpha-D-ribose 1-phosphate: step 1/6. In terms of biological role, catalyzes the interconversion of methylthioribose-1-phosphate (MTR-1-P) into methylthioribulose-1-phosphate (MTRu-1-P). The sequence is that of Methylthioribose-1-phosphate isomerase from Syntrophobacter fumaroxidans (strain DSM 10017 / MPOB).